A 377-amino-acid polypeptide reads, in one-letter code: Adaptive-response sensory kinase SasA (377 aa).

The 220-residue stretch at 154–373 (MLVHDLRSPL…SFHFTLPVYR (220 aa)) folds into the Histidine kinase domain. His157 carries the phosphohistidine; by autocatalysis modification.

As to quaternary structure, homooligomerizes. Interacts with KaiC. Participates in the KaiABC clock complex, whose core is composed of a KaiC homohexamer, 6 KaiB and up to 6 KaiA dimers. SasA and KaiB(fs) compete to bind to KaiC.

The catalysed reaction is ATP + protein L-histidine = ADP + protein N-phospho-L-histidine.. Functionally, member of the two-component regulatory system SasA/RpaA involved in genome-wide circadian gene expression. One of several clock output pathways. Participates in the Kai clock protein complex, the main circadian regulator in cyanobacteria, via its interaction with KaiC. KaiC enhances the autophosphorylation activity of SasA, which then transfers its phosphate group to RpaA to activate it. In addition to its output function, recruits fold-shifted KaiB (KaiB(fs)) to KaiC to cooperatively form the KaiB(6):KaiC(6) complex (independent of SasA kinase activity). Required for robustness of the circadian rhythm of gene expression and is involved in clock output, also required for adaptation to light/dark cycles. This chain is Adaptive-response sensory kinase SasA, found in Synechococcus sp. (strain JA-3-3Ab) (Cyanobacteria bacterium Yellowstone A-Prime).